The primary structure comprises 210 residues: BAG family molecular chaperone regulator 1 (210 aa).

One can recognise a Ubiquitin-like domain in the interval 8-85; that stretch reads SSVQTTIDIL…IIVMGGKNAL (78 aa). Residues 108 to 194 enclose the BAG domain; the sequence is AYDLNLRDVA…TLLNQNDALL (87 aa).

Homodimer or homotetramer.

May inhibit the chaperone activity of HSP70/HSC70 by promoting substrate release in an ATP-dependent manner. This is BAG family molecular chaperone regulator 1 (bag-1) from Caenorhabditis elegans.